The primary structure comprises 254 residues: Alcohol dehydrogenase 2 (254 aa).

Phe-10–Leu-33 is a binding site for NAD(+). Ser-138 lines the substrate pocket. Tyr-151 functions as the Proton acceptor in the catalytic mechanism.

This sequence belongs to the short-chain dehydrogenases/reductases (SDR) family. As to quaternary structure, homodimer.

The enzyme catalyses a primary alcohol + NAD(+) = an aldehyde + NADH + H(+). It carries out the reaction a secondary alcohol + NAD(+) = a ketone + NADH + H(+). The polypeptide is Alcohol dehydrogenase 2 (Adh2) (Drosophila wheeleri (Fruit fly)).